A 163-amino-acid polypeptide reads, in one-letter code: E1B protein, small T-antigen (163 aa).

This sequence belongs to the adenoviridae E1B 19 kDa protein family.

The protein resides in the host cell membrane. It localises to the host nucleus envelope. The protein localises to the host nucleus lamina. In terms of biological role, putative adenovirus Bcl-2 homolog that inhibits apoptosis induced by TNF or FAS pathways, as well as p53-mediated apoptosis. Without E1B 19K function, virus production is compromised because of premature death of host cell. Interacts with Bax protein in cell lysates. In Human adenovirus A serotype 12 (HAdV-12), this protein is E1B protein, small T-antigen.